Consider the following 127-residue polypeptide: uncharacterized protein (127 aa).

The segment at 1 to 34 (MKNPESSGVSSSPQIQRVSPSSSSTSPSPPSIGT) is disordered. Residues 9–34 (VSSSPQIQRVSPSSSSTSPSPPSIGT) are compositionally biased toward low complexity. A run of 2 helical transmembrane segments spans residues 47-67 (IAAV…PLAM) and 84-104 (TIAV…YLLV).

Its subcellular location is the membrane. This is an uncharacterized protein from Saccharomyces cerevisiae (strain ATCC 204508 / S288c) (Baker's yeast).